Consider the following 317-residue polypeptide: Urease accessory protein 6 (317 aa).

This sequence belongs to the UreF family. As to quaternary structure, URE4, URE6 and URE7 may form a complex that acts as a GTP-hydrolysis-dependent molecular chaperone, activating the urease apoprotein URE1.

Urease accessory protein required for the maturation and activation of urease via the functional incorporation of the urease nickel metallocenter. Plays a role in host brain invasion. This chain is Urease accessory protein 6, found in Cryptococcus neoformans var. grubii serotype A (strain H99 / ATCC 208821 / CBS 10515 / FGSC 9487) (Filobasidiella neoformans var. grubii).